The primary structure comprises 166 residues: Lipoprotein signal peptidase (166 aa).

The next 3 membrane-spanning stretches (helical) occupy residues 12-32 (WLWLVVVVLIIDLGSKYLILQ), 70-90 (WFFAGIAIGICVILLVMMYRS), and 102-122 (ALIIGGALGNLFDRLWHGFVV). Residues aspartate 123 and aspartate 141 contribute to the active site. The chain crosses the membrane as a helical span at residues 137-157 (FNLADTAICIGAALIVLEGFL).

It belongs to the peptidase A8 family.

The protein localises to the cell inner membrane. It catalyses the reaction Release of signal peptides from bacterial membrane prolipoproteins. Hydrolyzes -Xaa-Yaa-Zaa-|-(S,diacylglyceryl)Cys-, in which Xaa is hydrophobic (preferably Leu), and Yaa (Ala or Ser) and Zaa (Gly or Ala) have small, neutral side chains.. Its pathway is protein modification; lipoprotein biosynthesis (signal peptide cleavage). In terms of biological role, this protein specifically catalyzes the removal of signal peptides from prolipoproteins. In Salmonella paratyphi A (strain ATCC 9150 / SARB42), this protein is Lipoprotein signal peptidase.